The sequence spans 443 residues: Phosphoglucosamine mutase (443 aa).

The active-site Phosphoserine intermediate is the S102. Mg(2+) contacts are provided by S102, D241, D243, and D245. Phosphoserine is present on S102.

It belongs to the phosphohexose mutase family. Requires Mg(2+) as cofactor. Post-translationally, activated by phosphorylation.

The catalysed reaction is alpha-D-glucosamine 1-phosphate = D-glucosamine 6-phosphate. Its function is as follows. Catalyzes the conversion of glucosamine-6-phosphate to glucosamine-1-phosphate. The protein is Phosphoglucosamine mutase of Acinetobacter baylyi (strain ATCC 33305 / BD413 / ADP1).